The following is a 161-amino-acid chain: LGVLEKLNTMDLEKTPRIIILSAVGQDKITQQAITLGADYYTVKPFDMEVFTKRIREMFNSAPTIQESSAQSNRVSYPTTSSYILTSEPKSKTPVDLETEITNIIHEIGVPAHIKGYMYLREAITMVVNDMELLSAVTKELYPSIAKKYNTTASRVERAIR.

Residues 1-59 (LGVLEKLNTMDLEKTPRIIILSAVGQDKITQQAITLGADYYTVKPFDMEVFTKRIREMF) form the Response regulatory domain. Positions 143–161 (PSIAKKYNTTASRVERAIR) form a DNA-binding region, H-T-H motif.

Ca(2+) is required as a cofactor.

It is found in the cytoplasm. Functionally, may play the central regulatory role in sporulation. It may be an element of the effector pathway responsible for the activation of sporulation genes in response to nutritional stress. Spo0A may act in concert with spo0H (a sigma factor) to control the expression of some genes that are critical to the sporulation process. This chain is Stage 0 sporulation protein A homolog (spo0A), found in Clostridium butyricum.